The sequence spans 229 residues: Large ribosomal subunit protein uL1 (229 aa).

Belongs to the universal ribosomal protein uL1 family. As to quaternary structure, part of the 50S ribosomal subunit.

Binds directly to 23S rRNA. The L1 stalk is quite mobile in the ribosome, and is involved in E site tRNA release. In terms of biological role, protein L1 is also a translational repressor protein, it controls the translation of the L11 operon by binding to its mRNA. This Phytoplasma australiense protein is Large ribosomal subunit protein uL1.